A 238-amino-acid polypeptide reads, in one-letter code: Uroporphyrinogen-III C-methyltransferase (238 aa).

S-adenosyl-L-homocysteine-binding positions include Pro-11, 87-89 (GGD), 117-118 (TS), and Met-170.

It belongs to the precorrin methyltransferase family. Monomer.

It carries out the reaction uroporphyrinogen III + 2 S-adenosyl-L-methionine = precorrin-2 + 2 S-adenosyl-L-homocysteine + H(+). It participates in cofactor biosynthesis; adenosylcobalamin biosynthesis; precorrin-2 from uroporphyrinogen III: step 1/1. Its pathway is porphyrin-containing compound metabolism; siroheme biosynthesis; precorrin-2 from uroporphyrinogen III: step 1/1. With respect to regulation, SUMT exhibits a substrate inhibition phenomenon at uroporphyrinogen III concentrations above 0.5 uM; this property might play a regulatory role in cobalamin biosynthesis. Functionally, catalyzes the two successive C-2 and C-7 methylation reactions involved in the conversion of uroporphyrinogen III to precorrin-2 via the intermediate formation of precorrin-1. It is a step in the biosynthesis of both cobalamin (vitamin B12) and siroheme. This Priestia megaterium (Bacillus megaterium) protein is Uroporphyrinogen-III C-methyltransferase.